The following is a 198-amino-acid chain: Inner membrane-spanning protein YciB (198 aa).

A run of 5 helical transmembrane segments spans residues 36 to 56 (IYSA…ALFI), 67 to 87 (LTLI…SETF), 90 to 110 (WKAP…HFIG), 135 to 155 (IAWI…AFTF), and 162 to 182 (FKVF…GIYL).

Belongs to the YciB family.

Its subcellular location is the cell inner membrane. Functionally, plays a role in cell envelope biogenesis, maintenance of cell envelope integrity and membrane homeostasis. The polypeptide is Inner membrane-spanning protein YciB (Pseudomonas fluorescens (strain Pf0-1)).